Here is a 4246-residue protein sequence, read N- to C-terminus: MFESIVSNLLTRYLKEYIKALNTDNLNISIWSGNVSLENLELKSRALEKFNLPFTIKEGFLGKLSLKIPWNNLKTEPVIVVIDQLYITASPKSTTVWNEEDEDLLLQKKLKKLKIYEALKEEKRKKQQQLKEKREIRNNLIKEKRLQKKQIKNQLKQQLRQRKKDAKNASPVNSNNNNNNNSNLVSESNIPSSSSSSSSSLYDDDDNSSKDANKSDDTDMDVDDDDEFQEATEGDYDNEEEQDDHDEEDDLSDDDDDDDDEEDDYEMEDEDDVYKTLVDNQGNENDSQSGGLIDSSSFAEKLRNKIVDNLQIMIYNVHIRFEDSVTNPTTPYCFGVTLEHLLAQSSNEEWKPSFIHTPHTLVHKLITLQNLSIYWDADNDKPDLNYKSISEFKSLMTKLIPKKSSPSTTTTTPPISPPPKETQLIKPQHNYLLHPVCGSLKLLINKSIIPNKYIPLYTANFEFDEINLELESKQYSGILALVDWFTTQKKGERYRKFKTKESGGVLKTAKDRWEFAGKCILADVRDKIRKWTPQFFDKRRKDRLDYIHLYKLKKRKKTLSDLNTTKLNSLEKEYSFEDLVYFRSLADAQLKAEDNHQQQQKQQQQQQQQQSNISPKIISSNKNNNNDSSSGSSSNNNNSSTTSTTSTTTSSSSSSNSTDSKDIMKSSGDKNVNNNNNMGDNENKDNIDKKEENKNDDQDNKNKNKNKIITTISHKKNKSKDDQNSGGWFKWFGWGSSNKSKQQQQQQDESEDQDSSILGTLDITDQQKRELYSTIEYDEHQKSKNIVYPKDYVKTRINFTMNRGSVAFRLQPPNSPITHFSSKSPPSSKGNADLMIELVRMSVAVDKFVGSLYVQAILETIYVRDFFTKDTQFPILMKPIVVKNNTFVNSSSRTLPYSNSEGVEDINKDYLSIVSSSPSPVSSPSRDKRLEEETKQEDEKEKKLNVDKNLKCSLSSIEKVSCDKKSKDDCSSGGSGGVDNGGEEGDDKYSTKGTTESREESDGSGDYENNTNDEKQPLFSMTLQQNPLNSESDFSIFIEALPLEVVYNKSMMDAILEFFGNAPSDTLKEIEEAARNQIKIFKDKTTLRIQHELENHKSIDLDININAPHVLIPESFTIPSAPILVLDLGSFSVQSVVTHKDDTLSEEIEISSILKNDFSIIQQQQQQQQQQQQQQQQQQQQQQQQQQQQQQIPIQPQSQQQQQQQQQQQQQSQQQQQAQQQAQQQQQSQHPSSNDDNSSSNGGCSVDIKSPSVNTSIISDNSVYDEENVTKYLYDLFELKLNNIQFYIASQGESLQLVEKFDINFKIYKCIIKSQTLLSKLKLFGGLPSLNMLLSQKSIEILINIISTLQNDPPEISTHFSSKKNAEDENNNSNLDRVDFETVIHDQEVDIEEYYNGVNSDDDNNDDENDKTTQDDQDDKEKSSGNDDSLKKKSKKPKLKKEGSFILESMDLEHTQDQLPILMIYNTILEVSFSVTTVSLQVVEDDKPFIRMILSDISAQVLKRTFDTSIKLSLAKLSIEDLYQDFKNESFKYLANSSIDNNQQPLQSELENSSGIEREEHLISISISSVQRNSPQYSGISQQIDVSFNTLFVNINKKLVIKIMNLVDFVEKTIVETVMKRREKRKRLEKDKDNQPLPTSESNQQSIPQKQQQQQQQQQQQQQQQQQQQQQPPPPLQKQKSQSHINLGKAFENSTFKIDKDNSIVIITTKMKSLVVNLNEDDQSYFALTVSDLSINFDIDLESSMMRFKLGNLTISDISKEASKDLNPLFGTDGEHIIEFYVYTLKNSKPLETITTTATAKITLDNETKETISTTLFEKVKEKPPSSPLKDSTSILQDENEIFDTKIGVRMSSVKLIVVRSLIDRIIDYFEEFAPNQIDQILADSAKGAVEIMSTRRINQQKRILFEVDVNTPRIIFPKNHYSPYVIIADLGHISVFNKYKSNLTNSNGGDNTILSSEQVFVYASSVNFHACKFQNGKVLESTIEPISNKINVHVNIESFLNPSLLEEDQLDEPKQKVDGEISPINLKISDQQYSLTIAIIKSLIEPTIKQKKRKKRNHRRIESQLNLDNLYQNFLNVASSNQDFKSVDVPIGLPLPTPILESLHDHKSSSSSSSSSPPPPPPPSSSQQQQQQIIKSLDSIKDQITFHLPHISLEFFRKNKESVVSFEIDEFECSLIEYDNGNEYSNFSLGSIDLTDTRKSTVNHFRRIIHHSKEKNQQSADGSGLSPPLSKDEKEKKEMKKELQVYVFEKRGGDTQVKLILDHFRGVIVPESLISMIDFIMPGIKALSSLSEISPVSSPVLNVDTMNNNPHLFGRDPLKSTVKAMLEEKNKKRMTTNTVVHIETSNIDLSFVDNPATRESRLLIARGSLFGKVTIQKSDSLTYKDIQLCIDEFILFKCRADNFDQTIESIIDPLSITTNISMVEGKDYLPIDILIAVDPMHISISFQDLLLFLSLSKNIESLINSLNNLQQQHQQQNNNSNNNNNNNNNNNNNNNNNNNNNNNNNNDDKSKQEQQILRVNFQSPSVELTVINDYGNKYCGIIDLKIRDISVEVAQNRVLFAMFIAANYFNVSKSVWEPMIEEWGCKFGIETSEIGTKDQSKNIVISSSGKLNLNITKSLFDTFTTIYPLIEIAMDISKADSTQSAYDLGYKTGVNNNLLQHYKSQNYHPFLLKNQTGLEIQYQISIICASSFGDTQSNDFVGLSTSTSPSTSTTTTSTSTSTSTSTSTSTSTSTSTSTSTSTSNPTTSSKTQTTKNKILEDGGEIYLDLKETLYSNGNTNQEKDKFRSINNAQKYRDITSISLFRINIVVDGFEAISNLPIHKTGIYICSLIPKVNVSSSTKSLPSQQLVFEVRVSDFTKELIVRSNVLIVNETDHTLEYLDKPTHTLRKVCPFILEPKQSKSLSICGGNSSSSSSSSSSSTTDMIFSFRPMIHQSFSSSANLGNNQQRWTHPLNCNNGLLHPGTLLFDCPPNKFYCLQIDQHLSNFQLEDQQINPLTGGTIPQHQPSYHHISNQQYYENSMVNDENQDNQSSSSMNRIIQKTNHIIKIVPPLVIYNQFIIPIDITLHDQESNRTVGKESIQENQTKGIYCVNVERLIMIKVHMKGFGSSGFIQINQSSQNYINKQPRKLISTTSDQTFFVNIFQNELFGSIHVCLYPTFSIINQIGLNLSFKLNNLSDNNNNNNNNNNNNNNTIHDQPVIIASVFNSQTFSNLLTKNTPKNKTTTTTTTTAATTKPIQGTIDYKKDPKKWYNDKNISQISMFSPIPSNVGTSNNTSYLVLQVDGNSQWSQPISIQPNKQEPITIIKEQKESPTSSKITKLSLQFLISTSIANESLTTNITVDPQFILVNNLAQPLYYCQKDSNLYKNYCLNPNETIPFHFFDDQLLKKIAFRLSPNNDWSGCFNINKSISFNIKLDKPIDDDQDSDSDSGSSNSSSPSISSSSTSPLNLSSSSAFSNCSSNNNNNNGGGGGSSDDQFYLPMIQMVQEKGIYFVVVNPETKDYPPYRVENLISVPIAIHQVDTNEQPIPIFSNQSKRYVWSNPMGTKRLGITIPNTNYKKSVSLDKLQYHQPYQVKHSNKTLDIKLDIIANGPTNILRLTDLNDHNSISKTLNNNNNNNNNNNNNNLNSVTKDNNNNNNQNNNNQNNNNQNNNNLNFEICIGGISVSLIDGHPKELMYITLRGLQLRFKQYSTEQNINLSIHSFKVDNQLYHTPYPVMIQSYNSNNLKPTKHSFNVSLIRSGQYQPKELHQVGIEYIKELNFDIQPFDVEIDETILFHLYNFIKSIKLPNNQNNNNNQNNNNQNNDFNNIDEYDEKEKNDGKIIKSIKLPYSNLPIPHSIDSKRLYIEVLNLPLVDVTISYCLSPHSRPLIGPWASVFSTIANIDKASLHLGSWKLEHQFVTANALALSLFSHYKWEVSKILLYSDVFGAPLSLVENITRGINDFIYESKEGLNNPENFGKGLVKGTKSLVSNSIYGIFNSASKLTNTVGSAIAPFSMDENYLAQRDRHTQPKHAIDGVSNGIGRFTQGLAHGLSGLFDQPVKEFQDQGFSGLVKGFGKGILGTVVKPTVGAIDMINAATQGIRNSYLDPASSKSRSRPPRFIGPDAIIKPFSFEKSFLQQVIKTTNTHQSLLSSKEWYIIHFKVYDEKKTPYYLVISTQKFYLFDFKFNFILSIKLWDLDLSLKPKDDRYLSIQEIKKDDESPRNPTYVLLLDQDGKSISYSLLNSMHNIISTIKLDQTYFVSN.

One can recognise a Chorein N-terminal domain in the interval 2–113 (FESIVSNLLT…LLLQKKLKKL (112 aa)). Disordered regions lie at residues 141 to 271 (IKEK…EDED), 401 to 420 (PKKS…PPPK), 591 to 759 (KAED…SILG), 914 to 944 (VSSS…EKKL), 964 to 1014 (KKSK…TNDE), 1217 to 1251 (QAQQ…IKSP), 1356 to 1379 (ISTH…DRVD), 1395 to 1436 (YNGV…KSKK), 1622 to 1683 (REKR…KSQS), 2101 to 2131 (LESL…QQQQ), 2211 to 2237 (HHSK…EKEK), 2471 to 2513 (QQQH…KSKQ), 2704 to 2756 (LSTS…QTTK), 3421 to 3449 (IDDD…TSPL), 3611 to 3652 (KTLN…NNQN), and 3794 to 3813 (NNNN…NIDE). A compositionally biased stretch (low complexity) spans 168 to 201 (NASPVNSNNNNNNNSNLVSESNIPSSSSSSSSSL). A compositionally biased stretch (basic and acidic residues) spans 207–217 (NSSKDANKSDD). The span at 218–271 (TDMDVDDDDEFQEATEGDYDNEEEQDDHDEEDDLSDDDDDDDDEEDDYEMEDED) shows a compositional bias: acidic residues. 2 stretches are compositionally biased toward low complexity: residues 401–413 (PKKS…TTTP) and 597–658 (QQQQ…SNST). Residues 659–668 (DSKDIMKSSG) are compositionally biased toward basic and acidic residues. The segment covering 669-680 (DKNVNNNNNMGD) has biased composition (low complexity). The segment covering 681 to 702 (NENKDNIDKKEENKNDDQDNKN) has biased composition (basic and acidic residues). Low complexity-rich tracts occupy residues 725 to 747 (SGGW…QQQQ) and 914 to 924 (VSSSPSPVSSP). Composition is skewed to basic and acidic residues over residues 925 to 944 (SRDK…EKKL) and 987 to 1001 (DKYS…REES). The segment covering 1217 to 1241 (QAQQQAQQQQQSQHPSSNDDNSSSN) has biased composition (low complexity). Residues 1400–1409 (SDDDNNDDEN) show a composition bias toward acidic residues. Basic and acidic residues-rich tracts occupy residues 1410-1431 (DKTT…DSLK) and 1622-1634 (REKR…DKDN). Over residues 1644-1670 (QQSIPQKQQQQQQQQQQQQQQQQQQQQ) the composition is skewed to low complexity. Composition is skewed to low complexity over residues 2471–2506 (QQQH…NNNN), 2705–2755 (STST…TQTT), 3430–3449 (DSGS…TSPL), 3613–3652 (LNNN…NNQN), and 3794–3809 (NNNN…NDFN).

Belongs to the VPS13 family.

It is found in the membrane. In terms of biological role, mediates the transfer of lipids between membranes at organelle contact sites. The chain is Intermembrane lipid transfer protein vps13F (vps13F) from Dictyostelium discoideum (Social amoeba).